The chain runs to 449 residues: MELETHLSKYFTLAFTHKSMSLEMREKLAINSSATLKEFLQTIKNHCPNIKECMVLSTCNRFEIYASLRHGAHANEQKSALLKILAQNKKMSVSDLEKCVLMNTDESAVHHVFSVCSSLDSLVVGETQITGQMKNAYKFAFEEKFCSKDLTRLLHFAFKCAAKVRNLTGISKQGVSISSVAVKEALNIFEKERIKDKKALVIGLGEMAQLVIKHLLNKQFEALILGRNAAKFEDFIKELEEPKKVSFQNIENLNAYINEYELLFCATSSPHFIVQNSMLKETIFRRFWFDLAVPRNIEKPVLDNIFLYSVDDLEPMVKENVGNRQESRTKAYEIVGLATMEFYQWIQSLEVEPLIKDLRELARISAQKELQKALKKRYVPKEYESNIEKILHNAFNTFLHHPTIALKKNAQKEESDVLVGAIKNLFNLDKSNANHAQNLNLYKCEYYEE.

Residues 58 to 61, Ser-121, 126 to 128, and Gln-132 contribute to the substrate site; these read TCNR and ETQ. Cys-59 (nucleophile) is an active-site residue. 203–208 provides a ligand contact to NADP(+); sequence GLGEMA.

The protein belongs to the glutamyl-tRNA reductase family. Homodimer.

The catalysed reaction is (S)-4-amino-5-oxopentanoate + tRNA(Glu) + NADP(+) = L-glutamyl-tRNA(Glu) + NADPH + H(+). The protein operates within porphyrin-containing compound metabolism; protoporphyrin-IX biosynthesis; 5-aminolevulinate from L-glutamyl-tRNA(Glu): step 1/2. Catalyzes the NADPH-dependent reduction of glutamyl-tRNA(Glu) to glutamate 1-semialdehyde (GSA). The chain is Glutamyl-tRNA reductase from Helicobacter pylori (strain HPAG1).